A 67-amino-acid polypeptide reads, in one-letter code: Alpha-toxin Tf3 (67 aa).

An LCN-type CS-alpha/beta domain is found at 2 to 63; that stretch reads KDGYPVEGDN…EPTKTNGRCK (62 aa). 4 disulfides stabilise this stretch: Cys-12–Cys-62, Cys-16–Cys-38, Cys-24–Cys-45, and Cys-28–Cys-47. At Pro-64 the chain carries Proline amide.

This sequence belongs to the long (4 C-C) scorpion toxin superfamily. Sodium channel inhibitor family. Alpha subfamily. In terms of tissue distribution, expressed by the venom gland.

Its subcellular location is the secreted. Functionally, alpha toxins bind voltage-independently at site-3 of sodium channels (Nav) and inhibit the inactivation of the activated channels, thereby blocking neuronal transmission. This is Alpha-toxin Tf3 from Tityus fasciolatus (Central Brazilian scorpion).